The following is a 480-amino-acid chain: Sestrin-2 (480 aa).

N-acetylmethionine is present on Met-1. Residues 20-45 (PGGVGDSGPGEEQRESRARRGPRGPS) are disordered. An N-terminal domain; mediates the alkylhydroperoxide reductase activity region spans residues 66–239 (GLEALMSSGR…APTPPSEQSS (174 aa)). Residue Cys-125 is the Cysteine sulfenic acid (-SOH) intermediate of the active site. Residue Lys-175 forms a Glycyl lysine isopeptide (Lys-Gly) (interchain with G-Cter in ubiquitin) linkage. Positions 222–252 (ADGSPAPQAPTPPSEQSSPPSRDPLNNSGGF) are disordered. Ser-249 bears the Phosphoserine mark. The segment at 308-480 (PHPDMLCFVE…ALRAITRYMT (173 aa)) is C-terminal domain; mediates TORC1 regulation. Residues 374 to 377 (TYNT), Thr-386, and Glu-451 each bind L-leucine.

It belongs to the sestrin family. In terms of assembly, interacts with the GATOR2 complex which is composed of MIOS, SEC13, SEH1L, WDR24 and WDR59; the interaction is negatively regulated by leucine. Conveys leucine availability via direct interaction with SEH1L and WDR24 components of the GATOR2 complex. Interacts with RRAGA, RRAGB, RRAGC and RRAGD; may function as a guanine nucleotide dissociation inhibitor for RRAGs and regulate them. May interact with the TORC2 complex. Interacts with KEAP1, RBX1, SQSTM and ULK1; to regulate the degradation of KEAP1. May also associate with the complex composed of TSC1, TSC2 and the AMP-responsive protein kinase/AMPK to regulate TORC1 signaling. May interact with PRDX1. Phosphorylated by ULK1 at multiple sites. In terms of processing, ubiquitinated at Lys-175 by RNF167 via 'Lys-63'-linked polyubiquitination in response to leucine deprivation: ubiquitination promotes SESN2-interaction with the GATOR2 complex, leading to inhibit the TORC1 signaling pathway. Deubiquitinated at Lys-175 by STAMBPL1, promoting the TORC1 signaling pathway. Ubiquitinated by RNF186; ubiquitination mediates proteasomal degradation.

The protein resides in the cytoplasm. It catalyses the reaction a hydroperoxide + L-cysteinyl-[protein] = S-hydroxy-L-cysteinyl-[protein] + an alcohol. Functionally, functions as an intracellular leucine sensor that negatively regulates the mTORC1 signaling pathway through the GATOR complex. In absence of leucine, binds the GATOR subcomplex GATOR2 and prevents mTORC1 signaling. Binding of leucine to SESN2 disrupts its interaction with GATOR2 thereby activating the TORC1 signaling pathway. This stress-inducible metabolic regulator also plays a role in protection against oxidative and genotoxic stresses. May negatively regulate protein translation in response to endoplasmic reticulum stress, via mTORC1. May positively regulate the transcription by NFE2L2 of genes involved in the response to oxidative stress by facilitating the SQSTM1-mediated autophagic degradation of KEAP1. May also mediate TP53 inhibition of TORC1 signaling upon genotoxic stress. Moreover, may prevent the accumulation of reactive oxygen species (ROS) through the alkylhydroperoxide reductase activity born by the N-terminal domain of the protein. Was originally reported to contribute to oxidative stress resistance by reducing PRDX1. However, this could not be confirmed. This chain is Sestrin-2, found in Pongo abelii (Sumatran orangutan).